We begin with the raw amino-acid sequence, 806 residues long: Polyribonucleotide nucleotidyltransferase (806 aa).

Residues aspartate 488 and aspartate 494 each contribute to the Mg(2+) site. Positions 555-614 (PQIRTVQIPTDKIRDLIGPGGKTIRGIIEATQVKIDVDDTGRVNIASSDEEGLKKALAMI) constitute a KH domain. The S1 motif domain occupies 624–691 (GKTYLGKVVR…EGNRIKLSRK (68 aa)). The segment at 698–806 (RQKLGLPEPG…QGGGGNRGPQ (109 aa)) is disordered. The segment covering 704–717 (PEPGAEAPAAAEGQ) has biased composition (low complexity). A compositionally biased stretch (acidic residues) spans 738–757 (GGEDFDDFDEEGGEGEGEDE). Positions 758–774 (NFNREDTPNSAPGERRP) are enriched in basic and acidic residues. Over residues 783 to 792 (RGRRRRRGRG) the composition is skewed to basic residues. Residues 793–806 (RGPGQGGGGNRGPQ) are compositionally biased toward gly residues.

The protein belongs to the polyribonucleotide nucleotidyltransferase family. It depends on Mg(2+) as a cofactor.

The protein localises to the cytoplasm. The catalysed reaction is RNA(n+1) + phosphate = RNA(n) + a ribonucleoside 5'-diphosphate. Functionally, involved in mRNA degradation. Catalyzes the phosphorolysis of single-stranded polyribonucleotides processively in the 3'- to 5'-direction. The sequence is that of Polyribonucleotide nucleotidyltransferase from Acidobacterium capsulatum (strain ATCC 51196 / DSM 11244 / BCRC 80197 / JCM 7670 / NBRC 15755 / NCIMB 13165 / 161).